The primary structure comprises 189 residues: Vacuolar iron transporter homolog 2 (189 aa).

Residues 1-10 (MARAQWLRAA) are Cytoplasmic-facing. The chain crosses the membrane as a helical span at residues 11–31 (VLGANDGLVSVASLMIGIGAV). The Vacuolar portion of the chain corresponds to 32–38 (NENNKAM). Residues 39–59 (LVSGLAGLVAGACSMAIGEFV) form a helical membrane-spanning segment. Residues 60-97 (SVYAQYDIEVTQIERDGDIDGADAAAAREKLPSPTQAA) lie on the Cytoplasmic side of the membrane. Residues 98-118 (FASALAFAIGGLLPLLTSGFI) form a helical membrane-spanning segment. At 119-124 (KPWGPR) the chain is on the vacuolar side. The chain crosses the membrane as a helical span at residues 125 to 145 (VGVVCAASSVGLAGFGAAGGY). Residues 146–159 (LGGANMVRSGTRVL) lie on the Cytoplasmic side of the membrane. Residues 160-180 (LGGWLAMLITYAVLRLFATIF) form a helical membrane-spanning segment. Residues 181–189 (HGMNISSSA) lie on the Vacuolar side of the membrane.

The protein belongs to the CCC1 family.

The protein resides in the vacuole membrane. It catalyses the reaction Fe(2+)(in) = Fe(2+)(out). In terms of biological role, probable vacuolar iron transporter that may be involved in the regulation of iron distribution throughout the plant. The sequence is that of Vacuolar iron transporter homolog 2 from Oryza sativa subsp. japonica (Rice).